An 875-amino-acid polypeptide reads, in one-letter code: Neurotrypsin (875 aa).

The signal sequence occupies residues 1 to 20 (MTLARFALALLFGVLPEVVG). Asparagine 26 is a glycosylation site (N-linked (GlcNAc...) asparagine). The disordered stretch occupies residues 51 to 72 (QRHRRTRPPPPLPRFPRPPRAL). Residues 58–71 (PPPPLPRFPRPPRA) are compositionally biased toward pro residues. A Kringle domain is found at 93-165 (CPAGEPWVSV…GKVDWGYCDC (73 aa)). Disulfide bonds link cysteine 93-cysteine 165, cysteine 109-cysteine 149, cysteine 138-cysteine 163, cysteine 195-cysteine 259, cysteine 208-cysteine 269, cysteine 239-cysteine 249, cysteine 305-cysteine 369, cysteine 318-cysteine 379, cysteine 349-cysteine 359, cysteine 412-cysteine 475, cysteine 425-cysteine 485, cysteine 455-cysteine 465, cysteine 525-cysteine 589, cysteine 538-cysteine 599, cysteine 569-cysteine 579, cysteine 619-cysteine 750, cysteine 661-cysteine 677, cysteine 765-cysteine 831, cysteine 794-cysteine 808, and cysteine 821-cysteine 850. 4 consecutive SRCR domains span residues 170-271 (VRLR…MCSF), 280-381 (IRLV…SCTP), 387-487 (IRLA…ACYP), and 500-601 (VRLM…ICDY). Residues 619 to 630 (CGLRLLHRRQKR) are zymogen activation region. The Peptidase S1 domain occupies 631–874 (IIGGKNSLRG…FVPWIKSVTK (244 aa)). Histidine 676 acts as the Charge relay system in catalysis. N-linked (GlcNAc...) asparagine glycosylation occurs at asparagine 683. Aspartate 726 (charge relay system) is an active-site residue. Serine 825 (charge relay system) is an active-site residue.

Belongs to the peptidase S1 family.

It localises to the secreted. Its function is as follows. Plays a role in neuronal plasticity and the proteolytic action may subserve structural reorganizations associated with learning and memory operations. In Saguinus labiatus (Red-chested mustached tamarin), this protein is Neurotrypsin (PRSS12).